We begin with the raw amino-acid sequence, 992 residues long: Disks large-associated protein 1 (992 aa).

Disordered regions lie at residues 150–209 (TKSH…SWWS) and 355–376 (KAMG…PKVA). Ser-169 is subject to Phosphoserine. Over residues 194 to 209 (RSNASNASPTSPSWWS) the composition is skewed to low complexity. Phosphoserine is present on residues Ser-362, Ser-365, Ser-368, Ser-372, Ser-389, Ser-418, Ser-421, Ser-425, Ser-428, Ser-437, Ser-509, Ser-516, and Ser-578. A Phosphothreonine modification is found at Thr-579. A phosphoserine mark is found at Ser-581 and Ser-605. A Phosphothreonine modification is found at Thr-606. Ser-608 and Ser-611 each carry phosphoserine. Interaction with DYL2 regions lie at residues 665–676 (LSIGIQVDDAEE) and 687–698 (NKFQSVGVQVEE). The interval 914–980 (WKQMDPLDKK…QNSATESAES (67 aa)) is disordered. 2 stretches are compositionally biased toward basic and acidic residues: residues 918-927 (DPLDKKERRA) and 943-958 (IRER…EARK). Phosphoserine is present on Ser-947. Positions 969 to 978 (VRQNSATESA) are enriched in polar residues. Positions 990-992 (TRL) match the PDZ-binding motif.

This sequence belongs to the SAPAP family. In terms of assembly, interacts with the guanylate kinase-like domain of DLG1, DLG2, DLG3, DLG4 and AIP1. Interacts with the PDZ domain of SHANK1, SHANK2 and SHANK3. Found in a complex with DLG4 and SHANK1, SHANK2 or SHANK3. Found in a complex with DLG4 and BEGAIN. Interacts with DYL2 and LRFN1. Interacts with MPP2 (via the SH3-Guanylate kinase-like sub-module). In terms of processing, ubiquitinated by TRIM3; leading to proteasomal degradation. Highest levels in the neocortex, part of the hippocampus, the granule cell layer of the cerebellum, the glomerular layer of the olfactory bulb, the inner plexiform layer of the retina, the ventral and dorsal horn of the spinal cord, the neuromuscular junction and the submandibular ganglion.

It is found in the cell membrane. Its subcellular location is the postsynaptic density. The protein localises to the synapse. In terms of biological role, part of the postsynaptic scaffold in neuronal cells. This chain is Disks large-associated protein 1 (Dlgap1), found in Mus musculus (Mouse).